Reading from the N-terminus, the 379-residue chain is MKILRKNHPLLKIVNHSFIDLPTPSNISSWWNFGSLLGMCLMIQILTGLFLAMHYTSDTTTAFSSVAHICRDVNYGWLIRYLHANGASMFFICLFIHVGRGIYYGSYVLSETWNIGIILFLTTMATAFVGYVLPWGQMSFWGATVITNLLSAIPYIGNTLVEWIWGGFSVDKATLTRFFAFHFILPFIITAFALVHLLFLHETGSNNPSGLNSDSDKIPFHPYYTTKDLLGIFLLLLVLMILALFFPDILGDPDNFTPANPLNTPAHIKPEWYFLFAYAILRSIPNKLGGVLALVLSILILAAFPLLNNSKQHGLIFRPITQVIYWIFIANLLVLTWIGGQPVEYPFTMIGQIASITYFAIIIILIPISNTIENNIIKL.

The next 4 membrane-spanning stretches (helical) occupy residues 33–53, 77–98, 113–133, and 178–198; these read FGSL…FLAM, WLIR…FIHV, WNIG…GYVL, and FFAF…VHLL. Residues H83 and H97 each contribute to the heme b site. Positions 182 and 196 each coordinate heme b. Residue H201 coordinates a ubiquinone. 4 consecutive transmembrane segments (helical) span residues 226-246, 288-308, 320-340, and 347-367; these read TKDL…ALFF, LGGV…PLLN, ITQV…WIGG, and FTMI…ILIP.

It belongs to the cytochrome b family. The cytochrome bc1 complex contains 11 subunits: 3 respiratory subunits (MT-CYB, CYC1 and UQCRFS1), 2 core proteins (UQCRC1 and UQCRC2) and 6 low-molecular weight proteins (UQCRH/QCR6, UQCRB/QCR7, UQCRQ/QCR8, UQCR10/QCR9, UQCR11/QCR10 and a cleavage product of UQCRFS1). This cytochrome bc1 complex then forms a dimer. The cofactor is heme b.

Its subcellular location is the mitochondrion inner membrane. Its function is as follows. Component of the ubiquinol-cytochrome c reductase complex (complex III or cytochrome b-c1 complex) that is part of the mitochondrial respiratory chain. The b-c1 complex mediates electron transfer from ubiquinol to cytochrome c. Contributes to the generation of a proton gradient across the mitochondrial membrane that is then used for ATP synthesis. The polypeptide is Cytochrome b (MT-CYB) (Akodon spegazzinii (Spegazzini's grass mouse)).